The sequence spans 397 residues: Succinyl-diaminopimelate desuccinylase (397 aa).

His-73 serves as a coordination point for Zn(2+). Asp-75 is an active-site residue. Asp-106 serves as a coordination point for Zn(2+). Glu-140 (proton acceptor) is an active-site residue. Residues Glu-141, Glu-169, and His-366 each coordinate Zn(2+).

It belongs to the peptidase M20A family. DapE subfamily. As to quaternary structure, homodimer. Zn(2+) is required as a cofactor. Co(2+) serves as cofactor.

It carries out the reaction N-succinyl-(2S,6S)-2,6-diaminopimelate + H2O = (2S,6S)-2,6-diaminopimelate + succinate. Its pathway is amino-acid biosynthesis; L-lysine biosynthesis via DAP pathway; LL-2,6-diaminopimelate from (S)-tetrahydrodipicolinate (succinylase route): step 3/3. In terms of biological role, catalyzes the hydrolysis of N-succinyl-L,L-diaminopimelic acid (SDAP), forming succinate and LL-2,6-diaminopimelate (DAP), an intermediate involved in the bacterial biosynthesis of lysine and meso-diaminopimelic acid, an essential component of bacterial cell walls. The chain is Succinyl-diaminopimelate desuccinylase from Rhizobium leguminosarum bv. trifolii (strain WSM2304).